A 402-amino-acid chain; its full sequence is Phosphoglycerate kinase (402 aa).

Residues 24–26 (DFN), arginine 40, 63–66 (HFGR), arginine 122, and arginine 155 contribute to the substrate site. ATP-binding positions include lysine 206, glycine 297, glutamate 328, and 357–360 (GGDS).

This sequence belongs to the phosphoglycerate kinase family. As to quaternary structure, monomer.

Its subcellular location is the cytoplasm. It carries out the reaction (2R)-3-phosphoglycerate + ATP = (2R)-3-phospho-glyceroyl phosphate + ADP. Its pathway is carbohydrate degradation; glycolysis; pyruvate from D-glyceraldehyde 3-phosphate: step 2/5. The sequence is that of Phosphoglycerate kinase from Synechococcus sp. (strain RCC307).